Consider the following 301-residue polypeptide: Probable alpha-L-glutamate ligase (301 aa).

In terms of domain architecture, ATP-grasp spans 104 to 287 (LQLLSRKGIG…VADEIIRFIE (184 aa)). ATP is bound by residues Lys141, 178 to 179 (EF), Asp187, and 211 to 213 (RSN). Mg(2+)-binding residues include Asp248, Glu260, and Asn262. Asp248, Glu260, and Asn262 together coordinate Mn(2+).

It belongs to the RimK family. Requires Mg(2+) as cofactor. Mn(2+) serves as cofactor.

This chain is Probable alpha-L-glutamate ligase, found in Syntrophotalea carbinolica (strain DSM 2380 / NBRC 103641 / GraBd1) (Pelobacter carbinolicus).